The following is a 342-amino-acid chain: Large ribosomal subunit protein uL3 (342 aa).

The protein belongs to the universal ribosomal protein uL3 family. As to quaternary structure, part of the 50S ribosomal subunit. Forms a cluster with proteins L14 and L24e.

Its function is as follows. One of the primary rRNA binding proteins, it binds directly near the 3'-end of the 23S rRNA, where it nucleates assembly of the 50S subunit. The sequence is that of Large ribosomal subunit protein uL3 from Pyrobaculum islandicum (strain DSM 4184 / JCM 9189 / GEO3).